A 164-amino-acid chain; its full sequence is 6,7-dimethyl-8-ribityllumazine synthase (164 aa).

Residues phenylalanine 22, alanine 56–glutamate 58, and alanine 80–isoleucine 82 contribute to the 5-amino-6-(D-ribitylamino)uracil site. Aspartate 85–threonine 86 contributes to the (2S)-2-hydroxy-3-oxobutyl phosphate binding site. Histidine 88 functions as the Proton donor in the catalytic mechanism. Residue leucine 113 participates in 5-amino-6-(D-ribitylamino)uracil binding. Position 127 (arginine 127) interacts with (2S)-2-hydroxy-3-oxobutyl phosphate.

This sequence belongs to the DMRL synthase family.

The enzyme catalyses (2S)-2-hydroxy-3-oxobutyl phosphate + 5-amino-6-(D-ribitylamino)uracil = 6,7-dimethyl-8-(1-D-ribityl)lumazine + phosphate + 2 H2O + H(+). It participates in cofactor biosynthesis; riboflavin biosynthesis; riboflavin from 2-hydroxy-3-oxobutyl phosphate and 5-amino-6-(D-ribitylamino)uracil: step 1/2. Its function is as follows. Catalyzes the formation of 6,7-dimethyl-8-ribityllumazine by condensation of 5-amino-6-(D-ribitylamino)uracil with 3,4-dihydroxy-2-butanone 4-phosphate. This is the penultimate step in the biosynthesis of riboflavin. This is 6,7-dimethyl-8-ribityllumazine synthase from Gemmatimonas aurantiaca (strain DSM 14586 / JCM 11422 / NBRC 100505 / T-27).